The primary structure comprises 274 residues: Penicillin-insensitive murein endopeptidase (274 aa).

Residues 1-19 form the signal peptide; that stretch reads MKNTVIALLALLASAGSLA. 3 disulfide bridges follow: Cys-44–Cys-265, Cys-187–Cys-235, and Cys-216–Cys-223. Zn(2+)-binding residues include His-110, His-113, Asp-120, Asp-147, His-150, and His-211. The segment at 224-263 is disordered; that stretch reads EDQAPPPPGDGCGAELQSWFEPPKPGSTPPVKKTPPPLPP. Over residues 245–263 the composition is skewed to pro residues; the sequence is PPKPGSTPPVKKTPPPLPP.

The protein belongs to the peptidase M74 family. Dimer. Requires Zn(2+) as cofactor.

Its subcellular location is the periplasm. Functionally, murein endopeptidase that cleaves the D-alanyl-meso-2,6-diamino-pimelyl amide bond that connects peptidoglycan strands. Likely plays a role in the removal of murein from the sacculus. This chain is Penicillin-insensitive murein endopeptidase, found in Klebsiella pneumoniae (strain 342).